The sequence spans 180 residues: Pyruvoyl-dependent arginine decarboxylase (180 aa).

Serine 41 is subject to Pyruvic acid (Ser).

The protein belongs to the PdaD family. Requires pyruvate as cofactor.

The enzyme catalyses L-arginine + H(+) = agmatine + CO2. The protein is Pyruvoyl-dependent arginine decarboxylase of Methanococcoides burtonii (strain DSM 6242 / NBRC 107633 / OCM 468 / ACE-M).